The sequence spans 798 residues: Vacuolar protein sorting-associated protein 53 homolog (798 aa).

This sequence belongs to the VPS53 family. In terms of assembly, component of the Golgi-associated retrograde protein (GARP) complex, also called VFT (VPS fifty-three) complex, composed of vps-51, vps-52, vps-53 and vps-54. Within the complex interacts with vps-51, vps-52 and vps-54. Ubiquitously expressed, with particularly strong expression in neuronal cells. Specifically expressed in head and tail neurons and in the pharynx and ventral cord motor neurons.

The protein resides in the golgi apparatus. Its subcellular location is the trans-Golgi network membrane. It is found in the endosome membrane. It localises to the perikaryon. The protein localises to the cytoplasm. The protein resides in the perinuclear region. Its function is as follows. Acts as a component of the GARP complex that is involved in retrograde transport from early and late endosomes to the trans-Golgi network (TGN). The GARP complex facilitates tethering as well as SNARE complex assembly at the Golgi. Plays a role in the trafficking of cargo to dense-core vesicles, probably through association with the EARP-interacting protein eipr-1. Important for neuronal function. The protein is Vacuolar protein sorting-associated protein 53 homolog of Caenorhabditis elegans.